Reading from the N-terminus, the 511-residue chain is Bifunctional purine biosynthesis protein PurH (511 aa).

One can recognise an MGS-like domain in the interval 1–145 (MKKRALVSVS…KNHKFVSVIV (145 aa)).

This sequence belongs to the PurH family.

The catalysed reaction is (6R)-10-formyltetrahydrofolate + 5-amino-1-(5-phospho-beta-D-ribosyl)imidazole-4-carboxamide = 5-formamido-1-(5-phospho-D-ribosyl)imidazole-4-carboxamide + (6S)-5,6,7,8-tetrahydrofolate. It catalyses the reaction IMP + H2O = 5-formamido-1-(5-phospho-D-ribosyl)imidazole-4-carboxamide. It functions in the pathway purine metabolism; IMP biosynthesis via de novo pathway; 5-formamido-1-(5-phospho-D-ribosyl)imidazole-4-carboxamide from 5-amino-1-(5-phospho-D-ribosyl)imidazole-4-carboxamide (10-formyl THF route): step 1/1. The protein operates within purine metabolism; IMP biosynthesis via de novo pathway; IMP from 5-formamido-1-(5-phospho-D-ribosyl)imidazole-4-carboxamide: step 1/1. This is Bifunctional purine biosynthesis protein PurH from Bacillus cereus (strain B4264).